The following is a 1921-amino-acid chain: Endoribonuclease Dicer (1921 aa).

Positions L51–E227 constitute a Helicase ATP-binding domain. L64 to T71 lines the ATP pocket. Residues D175–H178 carry the DECH box motif. The tract at residues Y409–N433 is disordered. Over residues D414–E425 the composition is skewed to acidic residues. The Helicase C-terminal domain maps to N433 to E602. The Dicer dsRNA-binding fold domain maps to A630–Y722. Positions D727–R746 are disordered. A PAZ domain is found at K895 to P1042. Residues N1270–K1289 form a disordered region. 2 RNase III domains span residues D1277–T1404 and F1665–G1823. The Mg(2+) site is built by E1317, D1396, E1399, and E1704. The interval Q1782–I1801 is disordered. The Mg(2+) site is built by D1809 and E1812. Residues V1848–A1913 enclose the DRBM domain.

This sequence belongs to the helicase family. Dicer subfamily. Component of the RISC loading complex (RLC), or micro-RNA (miRNA) loading complex (miRLC), which is composed of DICER1, AGO2 and TARBP2; DICER1 and TARBP2 are required to process precursor miRNAs (pre-miRNAs) to mature miRNAs and then load them onto AGO2. Note that the trimeric RLC/miRLC is also referred to as RISC. The cofactor is Mg(2+). It depends on Mn(2+) as a cofactor.

It localises to the cytoplasm. The catalysed reaction is Endonucleolytic cleavage to 5'-phosphomonoester.. In terms of biological role, double-stranded RNA (dsRNA) endoribonuclease playing a central role in short dsRNA-mediated post-transcriptional gene silencing. Cleaves naturally occurring long dsRNAs and short hairpin pre-microRNAs (miRNA) into fragments of twenty-one to twenty-three nucleotides with 3' overhang of two nucleotides, producing respectively short interfering RNAs (siRNA) and mature microRNAs. SiRNAs and miRNAs serve as guide to direct the RNA-induced silencing complex (RISC) to complementary RNAs to degrade them or prevent their translation. Gene silencing mediated by siRNAs, also called RNA interference, controls the elimination of transcripts from mobile and repetitive DNA elements of the genome but also the degradation of exogenous RNA of viral origin for instance. The miRNA pathway on the other side is a mean to specifically regulate the expression of target genes. The polypeptide is Endoribonuclease Dicer (DICER1) (Gallus gallus (Chicken)).